The sequence spans 96 residues: CLAVATA3/ESR (CLE)-related protein 43 (96 aa).

The N-terminal stretch at M1–G28 is a signal peptide. Residues F71–N96 are disordered. Residue N74 is glycosylated (N-linked (GlcNAc...) asparagine). 2 positions are modified to hydroxyproline: P88 and P91. An O-linked (Ara...) hydroxyproline glycan is attached at P91.

The protein belongs to the CLV3/ESR signal peptide family. The O-glycosylation (arabinosylation) of the hydroxyproline Pro-91 enhances binding affinity of the CLE43p peptide for its receptor. As to expression, expressed at low levels in seedlings.

Its subcellular location is the secreted. The protein resides in the extracellular space. Extracellular signal peptide that regulates cell fate. Promotes pollen tube growth prolongation in a SKM1 and SKM2-dependent manner, especially under relatively high temperature (at 30 degrees Celsius), thus conferring tolerance against high temperature probably through the maintenance of mitochondrial activity. This is CLAVATA3/ESR (CLE)-related protein 43 from Arabidopsis thaliana (Mouse-ear cress).